The sequence spans 82 residues: Translational regulator CsrA (82 aa).

The protein belongs to the CsrA/RsmA family. As to quaternary structure, homodimer; the beta-strands of each monomer intercalate to form a hydrophobic core, while the alpha-helices form wings that extend away from the core.

The protein localises to the cytoplasm. Its function is as follows. A translational regulator that binds mRNA to regulate translation initiation and/or mRNA stability. Usually binds in the 5'-UTR at or near the Shine-Dalgarno sequence preventing ribosome-binding, thus repressing translation. Its main target seems to be the major flagellin gene, while its function is anatagonized by FliW. The chain is Translational regulator CsrA from Geobacillus kaustophilus (strain HTA426).